Reading from the N-terminus, the 101-residue chain is uncharacterized protein (101 aa).

Residues valine 70 to valine 90 form a helical membrane-spanning segment.

The protein resides in the membrane. This is an uncharacterized protein from Saccharomyces cerevisiae (strain ATCC 204508 / S288c) (Baker's yeast).